Consider the following 145-residue polypeptide: UPF0735 ACT domain-containing protein CLH_2637 (145 aa).

Residues 69–144 (TFNLIVKDQT…YVEKIEFVAM (76 aa)) form the ACT domain.

It belongs to the UPF0735 family.

This chain is UPF0735 ACT domain-containing protein CLH_2637, found in Clostridium botulinum (strain Alaska E43 / Type E3).